The primary structure comprises 1178 residues: Leucine--tRNA ligase, cytoplasmic (1178 aa).

Positions 54 and 56 each coordinate L-leucine. The 'HIGH' region motif lies at 62 to 65 (HLGH). At S169 the chain carries Phosphoserine. Residues 262 to 511 (GPQEYTLVKL…DAGDALIYME (250 aa)) are editing domain. L596 and S599 together coordinate L-leucine. Residues 718 to 722 (KMSKS) carry the 'KMSKS' region motif. K721 contacts ATP. Phosphoserine is present on S722. Residues K972 and K1049 each carry the N6-acetyllysine modification.

The protein belongs to the class-I aminoacyl-tRNA synthetase family.

The protein resides in the cytoplasm. It carries out the reaction tRNA(Leu) + L-leucine + ATP = L-leucyl-tRNA(Leu) + AMP + diphosphate. It catalyses the reaction L-methionyl-tRNA(Leu) + H2O = tRNA(Leu) + L-methionine + H(+). With respect to regulation, 5-fluoro-1,3-dihydro-1-hydroxy-1,2-benzoxaborole inhibits LARS1 by forming a covalent adduct with the 3' adenosine of tRNA(Leu) at the editing site, thus locking the enzyme in an inactive conformation. Functionally, aminoacyl-tRNA synthetase that catalyzes the specific attachment of leucine to its cognate tRNA (tRNA(Leu)). It performs tRNA aminoacylation in a two-step reaction: Leu is initially activated by ATP to form a leucyl-adenylate (Leu-AMP) intermediate; then the leucyl moiety is transferred to the acceptor 3' end of the tRNA to yield leucyl-tRNA. To improve the fidelity of catalytic reactions, it is also able to hydrolyze misactivated aminoacyl-adenylate intermediates (pre-transfer editing) and mischarged aminoacyl-tRNAs (post-transfer editing). This chain is Leucine--tRNA ligase, cytoplasmic (Lars1), found in Mus musculus (Mouse).